We begin with the raw amino-acid sequence, 770 residues long: Transcription activator AMTR1 (770 aa).

Residues Cys-7 to Cys-34 constitute a DNA-binding region (zn(2)-C6 fungal-type).

It is found in the nucleus. In terms of biological role, transcription factor that regulates the expression of the gene clusters that mediate the biosynthesis of AM-toxins, host-selective toxins (HSTs) causing Alternaria blotch on apple, a worldwide distributed disease. AM-toxins have two target sites for affecting susceptible apple cells; they cause invagination of the plasma membrane and electrolyte loss and chloroplast disorganization. The chain is Transcription activator AMTR1 from Alternaria alternata (Alternaria rot fungus).